A 388-amino-acid chain; its full sequence is Ribonuclease D (388 aa).

The 3'-5' exonuclease domain occupies 24 to 191 (QYVSDEASLN…LYPQLADKLK (168 aa)). One can recognise an HRDC domain in the interval 230 to 310 (TEHQLAYLKV…QTADLSNPPE (81 aa)).

The protein belongs to the RNase D family. A divalent metal cation serves as cofactor.

It is found in the cytoplasm. The enzyme catalyses Exonucleolytic cleavage that removes extra residues from the 3'-terminus of tRNA to produce 5'-mononucleotides.. Exonuclease involved in the 3' processing of various precursor tRNAs. Initiates hydrolysis at the 3'-terminus of an RNA molecule and releases 5'-mononucleotides. The protein is Ribonuclease D of Shewanella sp. (strain ANA-3).